Reading from the N-terminus, the 636-residue chain is Chaperone protein DnaK (636 aa).

The disordered stretch occupies residues 579–636 (ELYKNAAPPPGADGQQGADGQQGADGQQGADGQQGADGQQGADGQTTESSSNDETKTN). Over residues 590 to 623 (ADGQQGADGQQGADGQQGADGQQGADGQQGADGQ) the composition is skewed to low complexity.

This sequence belongs to the heat shock protein 70 family.

Its function is as follows. Acts as a chaperone. The sequence is that of Chaperone protein DnaK from Nitrosopumilus maritimus (strain SCM1).